Consider the following 223-residue polypeptide: Endonuclease V (223 aa).

Mg(2+) contacts are provided by Asp-35 and Asp-103.

It belongs to the endonuclease V family. Mg(2+) is required as a cofactor.

The protein localises to the cytoplasm. It catalyses the reaction Endonucleolytic cleavage at apurinic or apyrimidinic sites to products with a 5'-phosphate.. Functionally, DNA repair enzyme involved in the repair of deaminated bases. Selectively cleaves double-stranded DNA at the second phosphodiester bond 3' to a deoxyinosine leaving behind the intact lesion on the nicked DNA. This Shigella dysenteriae serotype 1 (strain Sd197) protein is Endonuclease V.